Reading from the N-terminus, the 312-residue chain is tRNA pseudouridine synthase B (312 aa).

Asp46 acts as the Nucleophile in catalysis. Positions 74, 177, and 198 each coordinate substrate.

It belongs to the pseudouridine synthase TruB family. Type 1 subfamily.

It catalyses the reaction uridine(55) in tRNA = pseudouridine(55) in tRNA. Responsible for synthesis of pseudouridine from uracil-55 in the psi GC loop of transfer RNAs. The protein is tRNA pseudouridine synthase B of Buchnera aphidicola subsp. Schizaphis graminum (strain Sg).